Consider the following 92-residue polypeptide: Elongation factor 1-beta (92 aa).

It belongs to the EF-1-beta/EF-1-delta family.

In terms of biological role, promotes the exchange of GDP for GTP in EF-1-alpha/GDP, thus allowing the regeneration of EF-1-alpha/GTP that could then be used to form the ternary complex EF-1-alpha/GTP/AAtRNA. The polypeptide is Elongation factor 1-beta (Hyperthermus butylicus (strain DSM 5456 / JCM 9403 / PLM1-5)).